Here is a 308-residue protein sequence, read N- to C-terminus: Methionyl-tRNA formyltransferase (308 aa).

Position 110–113 (110–113 (SLLP)) interacts with (6S)-5,6,7,8-tetrahydrofolate.

It belongs to the Fmt family.

It carries out the reaction L-methionyl-tRNA(fMet) + (6R)-10-formyltetrahydrofolate = N-formyl-L-methionyl-tRNA(fMet) + (6S)-5,6,7,8-tetrahydrofolate + H(+). In terms of biological role, attaches a formyl group to the free amino group of methionyl-tRNA(fMet). The formyl group appears to play a dual role in the initiator identity of N-formylmethionyl-tRNA by promoting its recognition by IF2 and preventing the misappropriation of this tRNA by the elongation apparatus. In Neisseria gonorrhoeae (strain NCCP11945), this protein is Methionyl-tRNA formyltransferase.